The sequence spans 371 residues: Chaperone protein DnaJ (371 aa).

The J domain occupies 5–69 (DYYEILGIAK…QKRAAYDQHG (65 aa)). The segment at 127 to 205 (GASKEIHITT…CRGQGKVEEP (79 aa)) adopts a CR-type zinc-finger fold. The Zn(2+) site is built by Cys-140, Cys-143, Cys-157, Cys-160, Cys-179, Cys-182, Cys-193, and Cys-196. CXXCXGXG motif repeat units follow at residues 140–147 (CEHCKGSG), 157–164 (CTTCRGVG), 179–186 (CPRCHGQG), and 193–200 (CRQCRGQG).

The protein belongs to the DnaJ family. As to quaternary structure, homodimer. The cofactor is Zn(2+).

The protein resides in the cytoplasm. In terms of biological role, participates actively in the response to hyperosmotic and heat shock by preventing the aggregation of stress-denatured proteins and by disaggregating proteins, also in an autonomous, DnaK-independent fashion. Unfolded proteins bind initially to DnaJ; upon interaction with the DnaJ-bound protein, DnaK hydrolyzes its bound ATP, resulting in the formation of a stable complex. GrpE releases ADP from DnaK; ATP binding to DnaK triggers the release of the substrate protein, thus completing the reaction cycle. Several rounds of ATP-dependent interactions between DnaJ, DnaK and GrpE are required for fully efficient folding. Also involved, together with DnaK and GrpE, in the DNA replication of plasmids through activation of initiation proteins. This Hamiltonella defensa subsp. Acyrthosiphon pisum (strain 5AT) protein is Chaperone protein DnaJ.